We begin with the raw amino-acid sequence, 802 residues long: Phenylalanine--tRNA ligase beta subunit (802 aa).

The 111-residue stretch at 38-148 folds into the tRNA-binding domain; that stretch reads SKNFERVIVG…SEVPVGTDIS (111 aa). In terms of domain architecture, B5 spans 403-478; the sequence is VIQKKIFVLK…RVFGYHNIPA (76 aa). Residues Asp-456, Asp-462, and Asp-466 each contribute to the Mg(2+) site. One can recognise an FDX-ACB domain in the interval 703 to 796; sequence SLYPRCSRDI…LQEKFNAILR (94 aa).

Belongs to the phenylalanyl-tRNA synthetase beta subunit family. Type 1 subfamily. In terms of assembly, tetramer of two alpha and two beta subunits. The cofactor is Mg(2+).

Its subcellular location is the cytoplasm. It carries out the reaction tRNA(Phe) + L-phenylalanine + ATP = L-phenylalanyl-tRNA(Phe) + AMP + diphosphate + H(+). The chain is Phenylalanine--tRNA ligase beta subunit from Buchnera aphidicola subsp. Baizongia pistaciae (strain Bp).